A 273-amino-acid polypeptide reads, in one-letter code: Terpene cyclase ascF (273 aa).

A run of 7 helical transmembrane segments spans residues 18 to 38 (VYEATFQFGGVAWTLCYILIA), 49 to 69 (MPLFALANNFAWEMVYALWVV), 78 to 98 (MTIWMLIDTPIIYSILKHGVL), 113 to 133 (ILVGLIALCAAAHWSWQSWWI), 153 to 173 (YWAVSMCQFLVSTMSLAMLCV), 178 to 198 (GGVSWMIWLSRFLGTLIGLNM), and 217 to 237 (APAVFVWGVTTVCDIIYGFVL).

It belongs to the paxB family.

Its subcellular location is the membrane. The catalysed reaction is ilicicolin A epoxide = ilicicolin C. The protein operates within secondary metabolite biosynthesis; terpenoid biosynthesis. In terms of biological role, terpene cyclase; part of the asc-1 gene cluster that mediates the biosynthesis of both ascochlorin and ascofuranone, a strong inhibitor of cyanide-insensitive alternative oxidases and a promising drug candidate against African trypanosomiasis. The first step in the pathway is performed by the non-reducing polyketide synthase ascC that produces orsellinic acid by condensing acetyl-CoA with 3 malonyl-CoA units. Orsellinic acid is then prenylated by the prenyltransferase ascA to yield ilicicolinic acid B. Ilicicolinic acid B is further reduced to ilicicolin B by the reductase ascB. The halogenase ascD then chlorinates ilicicolin B to produce ilicicolin A which is converted to ilicicolin A epoxide by the cytochrome P450 monooxygenase ascE that catalyzes stereoselective epoxidation of the terminal double bond of the prenyl group. Ilicicolin A epoxide is the last common precursor for the biosynthesis of ascofuranone and ascochlorin. The terpene cyclase ascF produces a monocyclic terpene, and the cyclization reaction is proposed to be initiated by protonation of the terminal epoxide of ilicicolin A epoxide to generate a monocyclic tertiarycation, which is followed by a series of hydride and methyl shifts with abstraction of proton, leading to the formation of the (14S,15R,19R)-trimethylcyclohexanone ring structure of ilicicolin C, which is finally reduced to ascochlorin by the dehydrogenase ascG. On the other hand, ilicicolin A epoxide is hydroxylated by the cytochrome P450 monooxygenase ascH, and the resultant product is cyclized by the terpene cyclase ascI to ascofuranol via protonation-initiated epoxide ring opening, which facilitates the 6-endo-tet cyclization to form the tetrahy-drofuran ring. Finally, ascofuranol is oxidized into ascofuranone by ascJ. In Acremonium egyptiacum (Oospora egyptiaca), this protein is Terpene cyclase ascF.